The following is a 468-amino-acid chain: ATP synthase subunit beta (468 aa).

Residue 155–162 (GGAGVGKT) coordinates ATP.

The protein belongs to the ATPase alpha/beta chains family. As to quaternary structure, F-type ATPases have 2 components, CF(1) - the catalytic core - and CF(0) - the membrane proton channel. CF(1) has five subunits: alpha(3), beta(3), gamma(1), delta(1), epsilon(1). CF(0) has three main subunits: a(1), b(2) and c(9-12). The alpha and beta chains form an alternating ring which encloses part of the gamma chain. CF(1) is attached to CF(0) by a central stalk formed by the gamma and epsilon chains, while a peripheral stalk is formed by the delta and b chains.

The protein localises to the cell membrane. It carries out the reaction ATP + H2O + 4 H(+)(in) = ADP + phosphate + 5 H(+)(out). Its function is as follows. Produces ATP from ADP in the presence of a proton gradient across the membrane. The catalytic sites are hosted primarily by the beta subunits. The sequence is that of ATP synthase subunit beta from Streptococcus equi subsp. zooepidemicus (strain H70).